Here is a 300-residue protein sequence, read N- to C-terminus: Ribosomal protein L11 methyltransferase (300 aa).

Threonine 152, glycine 173, aspartate 195, and asparagine 234 together coordinate S-adenosyl-L-methionine.

Belongs to the methyltransferase superfamily. PrmA family.

It is found in the cytoplasm. The enzyme catalyses L-lysyl-[protein] + 3 S-adenosyl-L-methionine = N(6),N(6),N(6)-trimethyl-L-lysyl-[protein] + 3 S-adenosyl-L-homocysteine + 3 H(+). Functionally, methylates ribosomal protein L11. The protein is Ribosomal protein L11 methyltransferase of Burkholderia pseudomallei (strain K96243).